The primary structure comprises 529 residues: DNA polymerase lambda (529 aa).

One can recognise a BRCT domain in the interval 14 to 109 (DPEGMFAGMV…EKANEDLYVL (96 aa)). The segment at 119-199 (PKKSLPAISG…ESTSVYKPPD (81 aa)) is disordered. The span at 153 to 175 (SHSNTQGSPDSPTSCSVPSTSAS) shows a compositional bias: polar residues. The span at 182 to 193 (ETPTSPQSESTS) shows a compositional bias: low complexity. Residues 213–227 (NIYRALGEDRRSFSY) form a DNA-binding region. The active site involves H260. The tract at residues 295-298 (GPAT) is DNA-binding. Residues R336, 367–370 (SYRR), and 376–379 (GDLD) each bind dCTP. The involved in primer binding stretch occupies residues 370-379 (RGKATCGDLD). Mn(2+) contacts are provided by D377, D379, and D444. The interval 418–459 (EEGTDSGVDTYFGLCTYPGQELRRRIDFKVYPRDIYSFGLIA) is DNA-binding. N467 contacts dCTP.

Belongs to the DNA polymerase type-X family. Interacts with the DNA repair proteins XRCC4 and LIG4. Interacts with HSP90-1. The cofactor is Mn(2+).

It localises to the nucleus. It catalyses the reaction DNA(n) + a 2'-deoxyribonucleoside 5'-triphosphate = DNA(n+1) + diphosphate. Its function is as follows. Repair polymerase involved in base excision repair (BER) and responsible for repair of lesions that give rise to abasic (AP) sites in DNA. Has both DNA polymerase and terminal transferase activities. Has a 5'-deoxyribose-5-phosphate lyase (dRP lyase) activity. Involved in the repair of transposon-induced DNA double strand breaks (DSBs). Involved in repair of UV-B-mediated DNA damage during seedling development through an excision repair mechanism. Involved the repair of DSBs induced by high salinity and DNA cross-linking agent. Functions via the DNA non-homologous end joining (NHEJ) pathway. The sequence is that of DNA polymerase lambda from Arabidopsis thaliana (Mouse-ear cress).